A 124-amino-acid chain; its full sequence is Probable cytochrome b5 1 (124 aa).

The Cytochrome b5 heme-binding domain maps to 3–79 (VKYFEPEEIV…LEEMYIGDLK (77 aa)). Heme-binding residues include His38 and His62. Residues 100–120 (PPLPLLIALIVLPAIAVIVFV) form a helical membrane-spanning segment.

This sequence belongs to the cytochrome b5 family.

Its subcellular location is the endoplasmic reticulum membrane. It is found in the microsome membrane. In terms of biological role, membrane bound hemoprotein which function as an electron carrier for several membrane bound oxygenases. In Schizosaccharomyces pombe (strain 972 / ATCC 24843) (Fission yeast), this protein is Probable cytochrome b5 1.